The following is a 298-amino-acid chain: ATP synthase gamma chain (298 aa).

The protein belongs to the ATPase gamma chain family. In terms of assembly, F-type ATPases have 2 components, CF(1) - the catalytic core - and CF(0) - the membrane proton channel. CF(1) has five subunits: alpha(3), beta(3), gamma(1), delta(1), epsilon(1). CF(0) has three main subunits: a, b and c.

It is found in the cell inner membrane. Functionally, produces ATP from ADP in the presence of a proton gradient across the membrane. The gamma chain is believed to be important in regulating ATPase activity and the flow of protons through the CF(0) complex. In Zymomonas mobilis subsp. mobilis (strain ATCC 31821 / ZM4 / CP4), this protein is ATP synthase gamma chain.